A 1147-amino-acid chain; its full sequence is ATP-dependent helicase/deoxyribonuclease subunit B (1147 aa).

8–15 lines the ATP pocket; it reads GGSGAGKS. Cys780, Cys1092, Cys1095, and Cys1101 together coordinate [4Fe-4S] cluster.

Belongs to the helicase family. AddB/RexB type 1 subfamily. In terms of assembly, heterodimer of AddA and AddB. The cofactor is Mg(2+). It depends on [4Fe-4S] cluster as a cofactor.

Its function is as follows. The heterodimer acts as both an ATP-dependent DNA helicase and an ATP-dependent, dual-direction single-stranded exonuclease. Recognizes the chi site generating a DNA molecule suitable for the initiation of homologous recombination. The AddB subunit has 5' -&gt; 3' nuclease activity but not helicase activity. The polypeptide is ATP-dependent helicase/deoxyribonuclease subunit B (Lachnoclostridium phytofermentans (strain ATCC 700394 / DSM 18823 / ISDg) (Clostridium phytofermentans)).